We begin with the raw amino-acid sequence, 361 residues long: Phospho-N-acetylmuramoyl-pentapeptide-transferase (361 aa).

Transmembrane regions (helical) follow at residues Leu28–Leu48, Thr74–Leu94, Ile99–Ala119, Ser133–Asp153, Leu168–Ser188, Val203–Ile223, Thr236–Phe256, Val263–Ile283, Val288–Val308, and Lys338–Leu358.

The protein belongs to the glycosyltransferase 4 family. MraY subfamily. Mg(2+) serves as cofactor.

Its subcellular location is the cell inner membrane. It carries out the reaction UDP-N-acetyl-alpha-D-muramoyl-L-alanyl-gamma-D-glutamyl-meso-2,6-diaminopimeloyl-D-alanyl-D-alanine + di-trans,octa-cis-undecaprenyl phosphate = di-trans,octa-cis-undecaprenyl diphospho-N-acetyl-alpha-D-muramoyl-L-alanyl-D-glutamyl-meso-2,6-diaminopimeloyl-D-alanyl-D-alanine + UMP. It participates in cell wall biogenesis; peptidoglycan biosynthesis. Its function is as follows. Catalyzes the initial step of the lipid cycle reactions in the biosynthesis of the cell wall peptidoglycan: transfers peptidoglycan precursor phospho-MurNAc-pentapeptide from UDP-MurNAc-pentapeptide onto the lipid carrier undecaprenyl phosphate, yielding undecaprenyl-pyrophosphoryl-MurNAc-pentapeptide, known as lipid I. This Rickettsia canadensis (strain McKiel) protein is Phospho-N-acetylmuramoyl-pentapeptide-transferase.